The sequence spans 415 residues: Polyketide biosynthesis malonyl-ACP decarboxylase PksF (415 aa).

The 402-residue stretch at 6–407 (LPEVVVTGVG…GMNTAVCIQN (402 aa)) folds into the Ketosynthase family 3 (KS3) domain.

This sequence belongs to the thiolase-like superfamily. Beta-ketoacyl-ACP synthases family.

It localises to the cytoplasm. The catalysed reaction is malonyl-[ACP] + H(+) = acetyl-[ACP] + CO2. It participates in antibiotic biosynthesis; bacillaene biosynthesis. Its function is as follows. Involved in some intermediate steps for the synthesis of the antibiotic polyketide bacillaene which is involved in secondary metabolism. It decarboxylates selectively the malonyl group attached on the acyl-carrier-protein AcpK (Mal-AcpK). This Bacillus subtilis (strain 168) protein is Polyketide biosynthesis malonyl-ACP decarboxylase PksF (pksF).